The primary structure comprises 146 residues: Large ribosomal subunit protein uL15 (146 aa).

The tract at residues Met1–Gly53 is disordered. Gly residues-rich tracts occupy residues Arg21 to Ser31 and Ser42 to Gly52.

This sequence belongs to the universal ribosomal protein uL15 family. In terms of assembly, part of the 50S ribosomal subunit.

Functionally, binds to the 23S rRNA. This is Large ribosomal subunit protein uL15 from Acholeplasma laidlawii (strain PG-8A).